Here is a 179-residue protein sequence, read N- to C-terminus: UPF0227 protein SO_2251 (179 aa).

This sequence belongs to the UPF0227 family.

The chain is UPF0227 protein SO_2251 from Shewanella oneidensis (strain ATCC 700550 / JCM 31522 / CIP 106686 / LMG 19005 / NCIMB 14063 / MR-1).